Reading from the N-terminus, the 212-residue chain is ER lumen protein-retaining receptor 2 (212 aa).

Over 1–4 the chain is Lumenal; sequence MNVF. Residues 5-24 form a helical membrane-spanning segment; the sequence is RLSGDLSHLAAIIILLLKIW. The Cytoplasmic segment spans residues 25 to 32; the sequence is KSRSCAGI. Residues 33-52 form a helical membrane-spanning segment; the sequence is SGKSQLLFALVFTTRYLDLL. Positions 47 to 48 are interaction with the K-D-E-L motif on target proteins; it reads RY. At 53 to 58 the chain is on the lumenal side; it reads TSFISL. A helical transmembrane segment spans residues 59 to 79; the sequence is YNTSMKVIYIGCAYATVYLIY. The Cytoplasmic portion of the chain corresponds to 80 to 92; that stretch reads MKFKATYDGNHDT. The chain crosses the membrane as a helical span at residues 93–110; the sequence is FRVEFLVVPVGGLSVLVN. Residues 111 to 116 are Lumenal-facing; that stretch reads HDFSPL. Residues 117–135 traverse the membrane as a helical segment; that stretch reads EILWTFSIYLESVAILPQL. Residues 136-149 lie on the Cytoplasmic side of the membrane; the sequence is FMISKTGEAETITT. The chain crosses the membrane as a helical span at residues 150 to 168; that stretch reads HYLFFLGLYRALYLFNWIW. Positions 159–169 are interaction with the K-D-E-L motif on target proteins; sequence RALYLFNWIWR. Topologically, residues 169-178 are lumenal; that stretch reads RYSFEGFFDL. The helical transmembrane segment at 179 to 199 threads the bilayer; sequence IAIVAGVVQTILYCDFFYLYV. Topologically, residues 200-212 are cytoplasmic; sequence TKVLKGKKLSLPA. Positions 204-207 are important for recycling of cargo proteins with the sequence motif K-D-E-L from the Golgi to the endoplasmic reticulum; that stretch reads KGKK.

The protein belongs to the ERD2 family.

Its subcellular location is the endoplasmic reticulum membrane. The protein resides in the golgi apparatus membrane. It is found in the cytoplasmic vesicle. The protein localises to the COPI-coated vesicle membrane. Functionally, receptor for the C-terminal sequence motif K-D-E-L that is present on endoplasmic reticulum resident proteins and that mediates their recycling from the Golgi back to the endoplasmic reticulum. Binding is pH dependent, and is optimal at pH 5-5.4. The sequence is that of ER lumen protein-retaining receptor 2 (kdelr2) from Xenopus tropicalis (Western clawed frog).